Here is a 181-residue protein sequence, read N- to C-terminus: Shikimate kinase 2 (181 aa).

ATP is bound at residue 12-17 (GCGKTT). Mg(2+) is bound by residues threonine 16 and aspartate 32. Substrate is bound by residues aspartate 34, arginine 58, and glycine 79. The tract at residues 112–126 (EAEPEVGLRPTLTGK) is LID domain. Position 120 (arginine 120) interacts with ATP. Arginine 139 contributes to the substrate binding site.

It belongs to the shikimate kinase family. AroL subfamily. Monomer. It depends on Mg(2+) as a cofactor.

The protein resides in the cytoplasm. It carries out the reaction shikimate + ATP = 3-phosphoshikimate + ADP + H(+). The protein operates within metabolic intermediate biosynthesis; chorismate biosynthesis; chorismate from D-erythrose 4-phosphate and phosphoenolpyruvate: step 5/7. Functionally, catalyzes the specific phosphorylation of the 3-hydroxyl group of shikimic acid using ATP as a cosubstrate. The polypeptide is Shikimate kinase 2 (Escherichia fergusonii (strain ATCC 35469 / DSM 13698 / CCUG 18766 / IAM 14443 / JCM 21226 / LMG 7866 / NBRC 102419 / NCTC 12128 / CDC 0568-73)).